Consider the following 257-residue polypeptide: tRNA (guanine-N(1)-)-methyltransferase (257 aa).

S-adenosyl-L-methionine is bound by residues Gly-117 and 137–142 (LGDFVL).

This sequence belongs to the RNA methyltransferase TrmD family. As to quaternary structure, homodimer.

Its subcellular location is the cytoplasm. It carries out the reaction guanosine(37) in tRNA + S-adenosyl-L-methionine = N(1)-methylguanosine(37) in tRNA + S-adenosyl-L-homocysteine + H(+). In terms of biological role, specifically methylates guanosine-37 in various tRNAs. In Bordetella pertussis (strain Tohama I / ATCC BAA-589 / NCTC 13251), this protein is tRNA (guanine-N(1)-)-methyltransferase.